Consider the following 207-residue polypeptide: Outer-membrane lipoprotein carrier protein (207 aa).

An N-terminal signal peptide occupies residues 1–21 (MRLIRMLLATALTFSVIPAHA).

Belongs to the LolA family. In terms of assembly, monomer.

The protein localises to the periplasm. Participates in the translocation of lipoproteins from the inner membrane to the outer membrane. Only forms a complex with a lipoprotein if the residue after the N-terminal Cys is not an aspartate (The Asp acts as a targeting signal to indicate that the lipoprotein should stay in the inner membrane). In Pseudomonas syringae pv. tomato (strain ATCC BAA-871 / DC3000), this protein is Outer-membrane lipoprotein carrier protein.